A 2179-amino-acid polypeptide reads, in one-letter code: Axotactin (2179 aa).

Positions 1 to 18 (MAFPYIWALLPLICSASG) are cleaved as a signal peptide. The Extracellular portion of the chain corresponds to 19–1816 (LSLPNMTSTD…DENKQEDSTQ (1798 aa)). 2 N-linked (GlcNAc...) asparagine glycosylation sites follow: asparagine 23 and asparagine 52. The tract at residues 59 to 107 (GGLAGSSTGGQSLPDTGGGNSAGGSPAGGSSGTGGGGSNSGISGNNSAM) is disordered. Residues 74–97 (TGGGNSAGGSPAGGSSGTGGGGSN) show a composition bias toward gly residues. Asparagine 103 is a glycosylation site (N-linked (GlcNAc...) asparagine). The BPTI/Kunitz inhibitor domain occupies 119–170 (CAGPGDPGPCKQYIYKWRYEPTTNECTNFIWGGCEGNPQNRFGTEAECLFHC). 3 disulfides stabilise this stretch: cysteine 119–cysteine 170, cysteine 128–cysteine 152, and cysteine 144–cysteine 166. Positions 201-220 (YTQSPAQSPDGMGGAEGGDG) are disordered. The segment covering 211-220 (GMGGAEGGDG) has biased composition (gly residues). The 197-residue stretch at 242-438 (KTFIFAKNNT…TKHENVNEGC (197 aa)) folds into the Laminin G-like 1 domain. N-linked (GlcNAc...) asparagine glycosylation is present at asparagine 249. Disulfide bonds link cysteine 405/cysteine 438, cysteine 442/cysteine 455, cysteine 449/cysteine 464, and cysteine 466/cysteine 476. The region spanning 439–477 (SDMCESRHNLCFVGSRCINHYGGISCDCFGTHYEGEHCD) is the EGF-like 1 domain. Laminin G-like domains are found at residues 481-664 (ATII…AEFV) and 660-839 (EAEF…LDNC). N-linked (GlcNAc...) asparagine glycans are attached at residues asparagine 542, asparagine 571, and asparagine 741. 4 disulfide bridges follow: cysteine 808–cysteine 839, cysteine 845–cysteine 857, cysteine 851–cysteine 866, and cysteine 868–cysteine 878. Positions 841–879 (YIDPCKRPNTCEHGGKCFVKDDRVTCDCKHTGYIGKNCH) constitute an EGF-like 2 domain. Residues asparagine 925, asparagine 1000, asparagine 1019, and asparagine 1026 are each glycosylated (N-linked (GlcNAc...) asparagine). Residues 1087-1259 (YVVTFTTSQS…VHLSEIIKDC (173 aa)) form the Laminin G-like 4 domain. 4 disulfide bridges follow: cysteine 1231–cysteine 1259, cysteine 1263–cysteine 1274, cysteine 1268–cysteine 1283, and cysteine 1285–cysteine 1296. Positions 1260–1297 (KPSCVPSPCRNGAQCKELWSSFKCVCNNPWAHIGEFCE) constitute an EGF-like 3 domain. One can recognise a Laminin G-like 5 domain in the interval 1316 to 1526 (RNYLSVGATP…PTQEGVLPNC (211 aa)). An N-linked (GlcNAc...) asparagine glycan is attached at asparagine 1393. 4 cysteine pairs are disulfide-bonded: cysteine 1494/cysteine 1526, cysteine 1530/cysteine 1541, cysteine 1535/cysteine 1552, and cysteine 1554/cysteine 1564. One can recognise an EGF-like 4 domain in the interval 1527–1565 (QIKCDAEPCKNGGTCQEHFAEQLSTCDCEHTSFLGEFCS). One can recognise a Laminin G-like 6 domain in the interval 1569 to 1765 (GADFSGESTL…NPQGVRSAQC (197 aa)). Residues asparagine 1667, asparagine 1707, asparagine 1751, and asparagine 1782 are each glycosylated (N-linked (GlcNAc...) asparagine). An intrachain disulfide couples cysteine 1722 to cysteine 1765. Residues 1817–1837 (VVFLTLTSVFVIIVICCLLEV) form a helical membrane-spanning segment. Residues 1838–2179 (YRSHLAYKKR…TSIDSILSLD (342 aa)) are Cytoplasmic-facing. 2 disordered regions span residues 1891-2141 (YTYK…PTLF) and 2156-2179 (SYLG…LSLD). The segment covering 1916-1930 (GSATPSQPGTPTALS) has biased composition (polar residues). Acidic residues predominate over residues 1940 to 1949 (EEEEEEEDEA). Positions 1954–1966 (AAEKSGENEEPPA) are enriched in basic and acidic residues. 2 stretches are compositionally biased toward polar residues: residues 1969–1981 (TTAS…QAQP) and 2010–2025 (EPSS…QLAQ). Positions 2064–2079 (PQEHKSRHKATDDTEA) are enriched in basic and acidic residues. Over residues 2082 to 2091 (QQQQQQQQQQ) the composition is skewed to low complexity. Composition is skewed to polar residues over residues 2092 to 2105 (SFDV…SSLP) and 2165 to 2179 (PRSN…LSLD).

It localises to the cell projection. The protein localises to the axon. Its subcellular location is the membrane. May have serine protease inhibitor activity. Might play a role in the glial-neuronal signaling pathway that is important in establishing the electrical properties of axonal membranes. In Drosophila melanogaster (Fruit fly), this protein is Axotactin.